The sequence spans 702 residues: Ribosomal RNA large subunit methyltransferase K/L (702 aa).

Positions leucine 43 to leucine 154 constitute a THUMP domain.

The protein belongs to the methyltransferase superfamily. RlmKL family.

The protein resides in the cytoplasm. It catalyses the reaction guanosine(2445) in 23S rRNA + S-adenosyl-L-methionine = N(2)-methylguanosine(2445) in 23S rRNA + S-adenosyl-L-homocysteine + H(+). The catalysed reaction is guanosine(2069) in 23S rRNA + S-adenosyl-L-methionine = N(2)-methylguanosine(2069) in 23S rRNA + S-adenosyl-L-homocysteine + H(+). Its function is as follows. Specifically methylates the guanine in position 2445 (m2G2445) and the guanine in position 2069 (m7G2069) of 23S rRNA. The chain is Ribosomal RNA large subunit methyltransferase K/L from Salmonella schwarzengrund (strain CVM19633).